Reading from the N-terminus, the 672-residue chain is ATP-dependent zinc metalloprotease FtsH 1 (672 aa).

Positions 1 to 22 (MKKDSESNSSDKSNKEELSTGR) are disordered. At 1-23 (MKKDSESNSSDKSNKEELSTGRR) the chain is on the cytoplasmic side. A helical membrane pass occupies residues 24 to 44 (GGNPMIIALVITVLAAMLFFN). At 45–141 (QPEPSSLISA…KFSPPDNTAA (97 aa)) the chain is on the periplasmic side. The helical transmembrane segment at 142 to 162 (ILNLLILVGLPLAIFFFIFMM) threads the bilayer. At 163-672 (IRRTRNDMMG…TSNASARRED (510 aa)) the chain is on the cytoplasmic side. 237–244 (GPPGTGKT) contributes to the ATP binding site. Zn(2+) is bound at residue H458. E459 is an active-site residue. Residues H462 and D534 each coordinate Zn(2+). Positions 642 to 672 (RLGDEEGKVEQIMAPEGAAERTSNASARRED) are disordered. Residues 662–672 (RTSNASARRED) are compositionally biased toward polar residues.

The protein in the central section; belongs to the AAA ATPase family. This sequence in the C-terminal section; belongs to the peptidase M41 family. In terms of assembly, homohexamer. Requires Zn(2+) as cofactor.

Its subcellular location is the cell inner membrane. In terms of biological role, acts as a processive, ATP-dependent zinc metallopeptidase for both cytoplasmic and membrane proteins. Plays a role in the quality control of integral membrane proteins. This Rhodopirellula baltica (strain DSM 10527 / NCIMB 13988 / SH1) protein is ATP-dependent zinc metalloprotease FtsH 1.